A 573-amino-acid chain; its full sequence is WRKY transcription factor SUSIBA2 (573 aa).

Disordered regions lie at residues 56–133 (AHPD…CSRE) and 157–192 (PAEVGTSEPQQMNSSDNAMQEPQSENVADKSADDGY). Over residues 64 to 85 (PRDKSVRNAHEDRGSRDFEFKP) the composition is skewed to basic and acidic residues. The segment covering 108 to 122 (MQNQSMNPSSSSSNM) has biased composition (low complexity). Positions 163–182 (SEPQQMNSSDNAMQEPQSEN) are enriched in polar residues. Residues 183-192 (VADKSADDGY) show a composition bias toward basic and acidic residues. A DNA-binding region (WRKY 1) is located at residues 183–247 (VADKSADDGY…YKGRHNHPKP (65 aa)). Cys-214, Cys-219, His-242, and His-244 together coordinate Zn(2+). The disordered stretch occupies residues 240-332 (GRHNHPKPQP…EDLESKRRKM (93 aa)). The span at 263–277 (GEERYDGASAADDKS) shows a compositional bias: basic and acidic residues. Residues 357–422 (SEVDILDDGY…YEGKHNHEVP (66 aa)) constitute a DNA-binding region (WRKY 2). The Zn(2+) site is built by Cys-388, Cys-393, His-417, and His-419.

This sequence belongs to the WRKY group I family. Expressed in endosperm, but not in leaves.

The protein localises to the nucleus. In terms of biological role, transcription factor involved in starch synthesis. Acts as a transcriptional activator in sugar signaling. Interacts specifically with the SURE and W-box elements, but not with the SP8a element. The protein is WRKY transcription factor SUSIBA2 of Hordeum vulgare (Barley).